Here is a 263-residue protein sequence, read N- to C-terminus: 5'-nucleotidase SurE (263 aa).

A divalent metal cation-binding residues include Asp-8, Asp-9, Ser-40, and Asn-93.

The protein belongs to the SurE nucleotidase family. Requires a divalent metal cation as cofactor.

The protein resides in the cytoplasm. It carries out the reaction a ribonucleoside 5'-phosphate + H2O = a ribonucleoside + phosphate. In terms of biological role, nucleotidase that shows phosphatase activity on nucleoside 5'-monophosphates. This chain is 5'-nucleotidase SurE, found in Caulobacter vibrioides (strain ATCC 19089 / CIP 103742 / CB 15) (Caulobacter crescentus).